A 199-amino-acid chain; its full sequence is Probable GTP-binding protein EngB (199 aa).

The region spanning 28 to 199 is the EngB-type G domain; sequence DLPEIALAGR…DSWDAILEQV (172 aa). Residues 36–43, 63–67, 81–84, 148–151, and 180–182 contribute to the GTP site; these read GRSNVGKS, GKTQL, DVPG, TKAD, and FSS. Positions 43 and 65 each coordinate Mg(2+).

Belongs to the TRAFAC class TrmE-Era-EngA-EngB-Septin-like GTPase superfamily. EngB GTPase family. Mg(2+) is required as a cofactor.

In terms of biological role, necessary for normal cell division and for the maintenance of normal septation. This Streptococcus pyogenes serotype M6 (strain ATCC BAA-946 / MGAS10394) protein is Probable GTP-binding protein EngB.